Here is a 108-residue protein sequence, read N- to C-terminus: UPF0060 membrane protein YE2027 (108 aa).

4 helical membrane-spanning segments follow: residues 6 to 26 (LLFFVTALAEIIGCFLPYLWL), 29 to 49 (GASMWLLLPAAASLALFVWLL), 59 to 79 (VYAAYGGVYVATALIWLRVVD), and 85 to 105 (LFDWVGAAVALVGMLIIVAGW).

Belongs to the UPF0060 family.

It is found in the cell inner membrane. This Yersinia enterocolitica serotype O:8 / biotype 1B (strain NCTC 13174 / 8081) protein is UPF0060 membrane protein YE2027.